A 367-amino-acid polypeptide reads, in one-letter code: NADH-quinone oxidoreductase subunit H (367 aa).

Transmembrane regions (helical) follow at residues 18–38 (VLLF…VAYL), 87–107 (LCFL…WAVI), 132–152 (IGVL…IIAG), 180–200 (LTIV…IVIA), 204–224 (MPYW…ISAL), 257–277 (FFLG…IFFF), 291–311 (IIPG…CFIW), and 328–348 (GWKV…GILV).

Belongs to the complex I subunit 1 family. As to quaternary structure, NDH-1 is composed of 14 different subunits. Subunits NuoA, H, J, K, L, M, N constitute the membrane sector of the complex.

The protein resides in the cell inner membrane. It carries out the reaction a quinone + NADH + 5 H(+)(in) = a quinol + NAD(+) + 4 H(+)(out). Functionally, NDH-1 shuttles electrons from NADH, via FMN and iron-sulfur (Fe-S) centers, to quinones in the respiratory chain. The immediate electron acceptor for the enzyme in this species is believed to be ubiquinone. Couples the redox reaction to proton translocation (for every two electrons transferred, four hydrogen ions are translocated across the cytoplasmic membrane), and thus conserves the redox energy in a proton gradient. This subunit may bind ubiquinone. This chain is NADH-quinone oxidoreductase subunit H, found in Ehrlichia ruminantium (strain Gardel).